We begin with the raw amino-acid sequence, 306 residues long: Ornithine carbamoyltransferase (306 aa).

Carbamoyl phosphate is bound by residues 51–54, Gln78, Arg102, and 129–132; these read STRT and HPCQ. L-ornithine contacts are provided by residues Asn160, Asp223, and 227-228; that span reads SM. Residues 263-264 and Arg291 each bind carbamoyl phosphate; that span reads CL.

This sequence belongs to the aspartate/ornithine carbamoyltransferase superfamily. OTCase family.

It is found in the cytoplasm. The enzyme catalyses carbamoyl phosphate + L-ornithine = L-citrulline + phosphate + H(+). It participates in amino-acid biosynthesis; L-arginine biosynthesis; L-arginine from L-ornithine and carbamoyl phosphate: step 1/3. Functionally, reversibly catalyzes the transfer of the carbamoyl group from carbamoyl phosphate (CP) to the N(epsilon) atom of ornithine (ORN) to produce L-citrulline. The protein is Ornithine carbamoyltransferase (argF) of Nostoc punctiforme (strain ATCC 29133 / PCC 73102).